A 453-amino-acid chain; its full sequence is Ribose 1,5-bisphosphate phosphokinase PhnN (453 aa).

Positions 1-21 (MHGSTGFVQGTRPAGDQADPL) are disordered. The interval 1-271 (MHGSTGFVQG…SGQGERASLP (271 aa)) is unknown. Residues 272–453 (HSGRIFFCVG…KLLDILRQAK (182 aa)) are ribose 1,5-bisphosphokinase.

The protein in the C-terminal section; belongs to the ribose 1,5-bisphosphokinase family.

The catalysed reaction is alpha-D-ribose 1,5-bisphosphate + ATP = 5-phospho-alpha-D-ribose 1-diphosphate + ADP. Its pathway is metabolic intermediate biosynthesis; 5-phospho-alpha-D-ribose 1-diphosphate biosynthesis; 5-phospho-alpha-D-ribose 1-diphosphate from D-ribose 5-phosphate (route II): step 3/3. In terms of biological role, catalyzes the phosphorylation of ribose 1,5-bisphosphate to 5-phospho-D-ribosyl alpha-1-diphosphate (PRPP). The sequence is that of Ribose 1,5-bisphosphate phosphokinase PhnN (phnN) from Janthinobacterium sp. (strain Marseille) (Minibacterium massiliensis).